The sequence spans 89 residues: Small ribosomal subunit protein uS15 (89 aa).

This sequence belongs to the universal ribosomal protein uS15 family. As to quaternary structure, part of the 30S ribosomal subunit. Forms a bridge to the 50S subunit in the 70S ribosome, contacting the 23S rRNA.

One of the primary rRNA binding proteins, it binds directly to 16S rRNA where it helps nucleate assembly of the platform of the 30S subunit by binding and bridging several RNA helices of the 16S rRNA. Functionally, forms an intersubunit bridge (bridge B4) with the 23S rRNA of the 50S subunit in the ribosome. The chain is Small ribosomal subunit protein uS15 from Nitratidesulfovibrio vulgaris (strain DSM 19637 / Miyazaki F) (Desulfovibrio vulgaris).